A 454-amino-acid polypeptide reads, in one-letter code: MSYSVLEALRKSPEEVRKVLLARRVDASLVDKFLALDAKWRQLKKEIDELRHLYNQLSREGAKAPPERRREISEKARELAAKLEKVEEEVKELERQREELLYSFPNLIHESVPVCPEGVDSVPVRHWGTVKVSNAALQSLDPGVEYVVVEKEPVGHADMAEVVLQMADTLKAGEVAGSRFYYLFDDLVWLDFALAMYAMDQLAQKGFRPVIPPYMLKFDIIRRVLDFDTFKDAIYKIEGEDLYLIATAEHGIAAYLYKRELLEEELPQLYVGWSPCFRKEAGAGNRDLKGIFRVHIFHKVEQFVFSLPEESWKWHEEITRNTEELIRGLGLPYRVVNICAHDLGAPAAKKYDIEVWYPAQAKYRELASCSNVTDWQSYRLGIRVTRKGMKKEYVHTLNCTGLATTRTITAILENFQRDDGVVEIPKALRPYLEPIKAAPKEYIYPRRIKQQPPS.

247–249 (TAE) lines the L-serine pocket. ATP-binding positions include 278–280 (RKE) and Val294. Residue Glu301 participates in L-serine binding. 365–368 (ELAS) provides a ligand contact to ATP. Thr400 is a binding site for L-serine.

It belongs to the class-II aminoacyl-tRNA synthetase family. Type-1 seryl-tRNA synthetase subfamily. As to quaternary structure, homodimer. The tRNA molecule binds across the dimer.

It localises to the cytoplasm. The enzyme catalyses tRNA(Ser) + L-serine + ATP = L-seryl-tRNA(Ser) + AMP + diphosphate + H(+). It catalyses the reaction tRNA(Sec) + L-serine + ATP = L-seryl-tRNA(Sec) + AMP + diphosphate + H(+). It functions in the pathway aminoacyl-tRNA biosynthesis; selenocysteinyl-tRNA(Sec) biosynthesis; L-seryl-tRNA(Sec) from L-serine and tRNA(Sec): step 1/1. In terms of biological role, catalyzes the attachment of serine to tRNA(Ser). Is also able to aminoacylate tRNA(Sec) with serine, to form the misacylated tRNA L-seryl-tRNA(Sec), which will be further converted into selenocysteinyl-tRNA(Sec). This Pyrobaculum calidifontis (strain DSM 21063 / JCM 11548 / VA1) protein is Serine--tRNA ligase.